The following is a 328-amino-acid chain: Solute-binding protein Bamb_6123 (328 aa).

An N-terminal signal peptide occupies residues 1–26; sequence MTHRFPRSRTALAVALMAGFAMSAQA. Residues His-35, Glu-73, Arg-89, Arg-149, Asn-209, and Glu-236 each contribute to the beta-D-galacturonate site. The beta-D-glucuronate site is built by His-35, Glu-73, Arg-89, Arg-149, Asn-209, and Glu-236.

It belongs to the bacterial solute-binding protein 7 family. The complex is comprised of an extracytoplasmic solute-binding protein and a heteromeric permease formed by two transmembrane proteins.

The protein localises to the periplasm. In terms of biological role, solute-binding protein that binds D-galacturonate and D-glucuronate (in vitro). Probably part of a tripartite ATP-independent periplasmic (TRAP) transport system that mediates solute transport into the cytoplasm. The polypeptide is Solute-binding protein Bamb_6123 (Burkholderia ambifaria (strain ATCC BAA-244 / DSM 16087 / CCUG 44356 / LMG 19182 / AMMD) (Burkholderia cepacia (strain AMMD))).